A 607-amino-acid chain; its full sequence is Fucose-1-phosphate guanylyltransferase (607 aa).

Residues 1–21 (MRAVRRGLREGGAMAAARDPP) form a disordered region.

As to expression, expressed in many tissues.

The protein localises to the cytoplasm. The enzyme catalyses beta-L-fucose 1-phosphate + GTP + H(+) = GDP-beta-L-fucose + diphosphate. Its function is as follows. Catalyzes the formation of GDP-L-fucose from GTP and L-fucose-1-phosphate. Functions as a salvage pathway to reutilize L-fucose arising from the turnover of glycoproteins and glycolipids. The protein is Fucose-1-phosphate guanylyltransferase of Homo sapiens (Human).